Reading from the N-terminus, the 146-residue chain is 16.0 kDa heat shock protein, peroxisomal (146 aa).

The 121-residue stretch at 23 to 143 (WASASATAAM…RPRTRPIAVS (121 aa)) folds into the sHSP domain. A Microbody targeting signal motif is present at residues 144–146 (SKL).

The protein belongs to the small heat shock protein (HSP20) family. As to quaternary structure, may form oligomeric structures.

The protein resides in the peroxisome. The chain is 16.0 kDa heat shock protein, peroxisomal (HSP16.0) from Oryza sativa subsp. japonica (Rice).